The following is a 93-amino-acid chain: Small ribosomal subunit protein uS19 (93 aa).

Residues 74-93 form a disordered region; that stretch reads FSPTRTFRGHVKDDRKSKRR. Residues 83 to 93 are compositionally biased toward basic and acidic residues; the sequence is HVKDDRKSKRR.

It belongs to the universal ribosomal protein uS19 family.

Functionally, protein S19 forms a complex with S13 that binds strongly to the 16S ribosomal RNA. This chain is Small ribosomal subunit protein uS19, found in Streptomyces griseus subsp. griseus (strain JCM 4626 / CBS 651.72 / NBRC 13350 / KCC S-0626 / ISP 5235).